The sequence spans 659 residues: Threonine--tRNA ligase (659 aa).

The TGS domain occupies 3 to 64 (EKIRITLIDN…LEDGRLEIIT (62 aa)). Residues 249–555 (DHRRLGQEMD…LIEHHAGRFP (307 aa)) form a catalytic region. Zn(2+) contacts are provided by cysteine 354, histidine 405, and histidine 532.

Belongs to the class-II aminoacyl-tRNA synthetase family. In terms of assembly, homodimer. Requires Zn(2+) as cofactor.

It is found in the cytoplasm. The enzyme catalyses tRNA(Thr) + L-threonine + ATP = L-threonyl-tRNA(Thr) + AMP + diphosphate + H(+). Catalyzes the attachment of threonine to tRNA(Thr) in a two-step reaction: L-threonine is first activated by ATP to form Thr-AMP and then transferred to the acceptor end of tRNA(Thr). Also edits incorrectly charged L-seryl-tRNA(Thr). The protein is Threonine--tRNA ligase of Zymomonas mobilis subsp. mobilis (strain ATCC 31821 / ZM4 / CP4).